The sequence spans 689 residues: MSNVEKKISQLQQQLNQYNHEYYVLDQPSVPDAEYDRLMTALIDLEKTNPELKTIDSPSQKVGGQALKSFTQVTHQLPMLSLDNVFSLDDFHAFVKRVKDRLNDNQAIVFCAEPKLDGLAVSLRYEHGQLIQAATRGDGSVGENITTNIRTIKSIPLKLMGTPGKDFPDIVEVRGEVFMPKASFDALNTLAKKRGEKGFANPRNAAAGSLRQLDSKITAKRNLAFYAYSLGFVGKLSDGGAESTDLTNDFFANSHHERLCQLKRLGLPMCPEVRLLESEQACDAFYQDILAKRSALSYEIDGTVLKVDEISLQKRLGFVARAPRWAIAYKFPAEEELTCVEDVEFQVGRTGAITPVARLKPVFVGGVTVSNATLHNQDEITRLGLKVNDFVVIRRAGDVIPQIVSVVLDKRPDNAVDIVFPTSCPVCDSAVAKPEGEAVLRCTAGLFCAAQRKEAIKHFASRKAHDVDGLGDKLVEQLVDEKLINTPADLFKLTEIQVSTIDRMGKKSATNLINGLEQAKSTTLAKFIYGLGIREVGEATAANLANHFYTLAAIESASLEDLQNVSDVGEVVAKNIINFFKEEHNLAIVSGLSEVMHWPTIEIKSAEELPLAEQIFVLTGTLTQMGRTEAKTALQSLGAKVSGSVSKNTHFVVAGDKAGSKLTKAQDLGISVLTEDGLVALLAEHGITI.

NAD(+)-binding positions include 32–36, 81–82, and Glu113; these read DAEYD and SL. Catalysis depends on Lys115, which acts as the N6-AMP-lysine intermediate. NAD(+) is bound by residues Arg136, Glu176, Lys306, and Lys330. Residues Cys424, Cys427, Cys442, and Cys448 each contribute to the Zn(2+) site. Positions 606-689 constitute a BRCT domain; that stretch reads AEELPLAEQI…ALLAEHGITI (84 aa).

This sequence belongs to the NAD-dependent DNA ligase family. LigA subfamily. The cofactor is Mg(2+). Mn(2+) serves as cofactor.

The enzyme catalyses NAD(+) + (deoxyribonucleotide)n-3'-hydroxyl + 5'-phospho-(deoxyribonucleotide)m = (deoxyribonucleotide)n+m + AMP + beta-nicotinamide D-nucleotide.. In terms of biological role, DNA ligase that catalyzes the formation of phosphodiester linkages between 5'-phosphoryl and 3'-hydroxyl groups in double-stranded DNA using NAD as a coenzyme and as the energy source for the reaction. It is essential for DNA replication and repair of damaged DNA. This chain is DNA ligase, found in Colwellia psychrerythraea (strain 34H / ATCC BAA-681) (Vibrio psychroerythus).